Consider the following 316-residue polypeptide: MTVIDNHGALAKDGELSEASARDYFELLKPRVMSLVVFTAFAGLVLAPGHIHPVLGLIAILCIAVGAGASGALNMWYDADIDAIMSRTAKRPIPAGRIAPSEALAFGLVLSGFSVVILGLAVNWLSAGILAFTIFFYAVVYTMWLKRSTPQNIVIGGAAGAFPPMIGWACVTNSVTIESTVLFLIIFLWTPAHFWALALFKMRDYEAVGVPMLPNVAGERVTKHQIVAYAVLTAVCGILPSFLGFASFGYGLVAAALGAIFIYCSIAVWRMPDGDLKMIPAKKLFAFSIFYLFAVFSALMIDRLASIFVSHTGGWF.

A run of 9 helical transmembrane segments spans residues 32–52 (VMSL…GHIH), 53–73 (PVLG…SGAL), 93–113 (IPAG…LSGF), 116–136 (VILG…TIFF), 152–172 (NIVI…ACVT), 180–200 (TVLF…LALF), 221–241 (VTKH…ILPS), 252–271 (LVAA…VWRM), and 289–309 (IFYL…SIFV).

It belongs to the UbiA prenyltransferase family. Protoheme IX farnesyltransferase subfamily.

It is found in the cell inner membrane. The enzyme catalyses heme b + (2E,6E)-farnesyl diphosphate + H2O = Fe(II)-heme o + diphosphate. Its pathway is porphyrin-containing compound metabolism; heme O biosynthesis; heme O from protoheme: step 1/1. Converts heme B (protoheme IX) to heme O by substitution of the vinyl group on carbon 2 of heme B porphyrin ring with a hydroxyethyl farnesyl side group. In Rhizobium leguminosarum bv. trifolii (strain WSM2304), this protein is Protoheme IX farnesyltransferase.